Consider the following 326-residue polypeptide: Serpentine receptor class alpha-12 (326 aa).

Residues 1–17 (MSCASEVQAQLFTHPVQ) are Extracellular-facing. The helical transmembrane segment at 18 to 38 (IIYACVQTVLFLATIIGSLLA) threads the bilayer. Residues 39 to 54 (IVQLCKKTTIPDSTKV) lie on the Cytoplasmic side of the membrane. Residues 55 to 75 (LLIGALFFANAHELAYFSSPF) form a helical membrane-spanning segment. At 76 to 101 (KVFKMNLFHTNTSCYPLASTLECIPT) the chain is on the extracellular side. A helical membrane pass occupies residues 102–122 (TTVLAMGISGNMLIQSALSIF). At 123-138 (RLLATIFPVCYSRMRA) the chain is on the cytoplasmic side. The chain crosses the membrane as a helical span at residues 139–159 (LPGVVLLFMVLIPSFLSYSWI). At 160–185 (RSDIVLDDYQMFCSQWSANISSRANT) the chain is on the extracellular side. The helical transmembrane segment at 186–206 (YLEYCSYLTVAHIIINALIIL) threads the bilayer. Over 207 to 234 (RNRSVESKCRFDVQQRYLNSETLKTTQT) the chain is Cytoplasmic. A helical transmembrane segment spans residues 235–255 (ICYLSIAQFLAMFLYSGGVLF). The Extracellular segment spans residues 256–270 (MRKNQKNIPTLIYIN). Residues 271 to 291 (VIVWVYAPPYACVSLAPLILF) form a helical membrane-spanning segment. The Cytoplasmic segment spans residues 292–326 (SLWNLKKQRQIRIQSITVQKETQEDHIRKLQLSWG).

This sequence belongs to the nematode receptor-like protein sra family.

It is found in the membrane. This chain is Serpentine receptor class alpha-12, found in Caenorhabditis briggsae.